The chain runs to 72 residues: Large ribosomal subunit protein uL29 (72 aa).

The protein belongs to the universal ribosomal protein uL29 family.

This Prochlorococcus marinus subsp. pastoris (strain CCMP1986 / NIES-2087 / MED4) protein is Large ribosomal subunit protein uL29.